The sequence spans 587 residues: Serine/threonine-protein phosphatase 2A 65 kDa regulatory subunit A beta isoform (587 aa).

The residue at position 2 (S2) is an N-acetylserine. HEAT repeat units lie at residues 2-42 (SMID…ALGE), 44-80 (RTRKELIPFLSENNDDDDEVLLAMAEELGVFIPYVGG), 81-119 (VEYAHVLLPPLETLSTVEETCVREKAVESLCRVGSQMRE), 158-196 (DMLKTELRSLYTQLCQDDMPMVRRAAATNLGKFAATVES), 197-235 (AHLKTDVMSMFEDLTQDDQDSVRLLAVEGCAALGKLLEP), 236-274 (QDCVQHILPVIVNFSQDKSWRVRYMVANQLYELCEAVGP), 275-313 (EPTRTELVPAYVRLLRDNEAEVRIAAAGKVTKFCRILNP), 315-352 (IAIQHILPCVKELSSDSSQHVRSALASVIMGMAPVLGK), 353-391 (DATIEHLLPIFLSLLKDEFPDVRLNIISKLDQVNQVIGI), 393-430 (LLSQSLLPAIVELAEDRHWRVRLAIIEYIPLLASQLGV), 432-469 (FFDDKLGALCMQWLQDKVHSIRDAAANNLKRLAEEFGP), 470-508 (EWAMQHIVPQVLEMVNNPHYLYRMTILRAVSLLAPVMGS), 509-547 (EITCSKLLPVVMTASKDRVPNIKFNVAKVLQSLIPIVDQ), and 549-586 (VVEKTIRPGLVELSEDPDVDVRFFANQALQSIDNVMMS).

The protein belongs to the phosphatase 2A regulatory subunit A family. In terms of assembly, PP2A consists of a common heterodimeric core enzyme, composed of a 36 kDa catalytic subunit (subunit C) and a 65 kDa constant regulatory subunit (subunit A), that associates with a variety of regulatory subunits such as subunits B (the R2/B/PR55/B55, R3/B''/PR72/PR130/PR59 and R5/B'/B56 families). Interacts with B'THETA. Interacts with SRK2E/OST1. Interacts with SIC/RON3. As to expression, ubiquitous, with higher levels in roots and flowers (at protein level).

The protein resides in the cytoplasm. It is found in the cytosol. Its subcellular location is the nucleus. The protein localises to the peroxisome. The A subunit of protein phosphatase 2A serves as a scaffolding molecule to coordinate the assembly of the catalytic subunit and a variable regulatory B subunit. Involved during developmental process such as seedling and floral developments. Seems to act as a negative regulator of PP2A catalytic activity. Associates with the serine/threonine-protein phosphatase PP2A catalytic subunit C and regulatory subunit B' to positively regulates beta-oxidation of fatty acids and protoauxins in peroxisomes by dephosphorylating peroxisomal beta-oxidation-related proteins. The polypeptide is Serine/threonine-protein phosphatase 2A 65 kDa regulatory subunit A beta isoform (PP2AA2) (Arabidopsis thaliana (Mouse-ear cress)).